A 136-amino-acid chain; its full sequence is Small ribosomal subunit protein eS12 (136 aa).

The protein belongs to the eukaryotic ribosomal protein eS12 family.

The chain is Small ribosomal subunit protein eS12 (rps12) from Dictyostelium discoideum (Social amoeba).